We begin with the raw amino-acid sequence, 276 residues long: MKVTIDVTGKKKDERQDNEKQSVIYPVVKNEKEASVSEGKPAAVIDSILLLSTILVAWILHPISKKIFGNFLLHIVGWGNLGYLVFSTISNLFSRSLESEDDSVLEAEDIEDIVAIITLLLHLFTFVFLVVNRFVVNGTINKLSNAIVCNPLGIYFASSNFLEAQKALKFQKPYHISYIILKATFIIGAAVSFDYDKDINRGILMRFFLLFFLGIILFIVEDYVISMFKISKEKITSFRVFMNIILVVAYTVAGYYMMNRIFLQESVCSNSSNKVV.

The protein to E.cuniculi ECU05_1600/ECU11_0130.

This is an uncharacterized protein from Encephalitozoon cuniculi (strain GB-M1) (Microsporidian parasite).